We begin with the raw amino-acid sequence, 555 residues long: Urocanate hydratase (555 aa).

Residues 52–53 (GG), Q130, 176–178 (GMG), E196, R201, 242–243 (NA), 263–267 (QTSAH), 273–274 (YL), and Y322 contribute to the NAD(+) site. C410 is a catalytic residue. G492 is a binding site for NAD(+).

This sequence belongs to the urocanase family. NAD(+) serves as cofactor.

It is found in the cytoplasm. It carries out the reaction 4-imidazolone-5-propanoate = trans-urocanate + H2O. It participates in amino-acid degradation; L-histidine degradation into L-glutamate; N-formimidoyl-L-glutamate from L-histidine: step 2/3. Catalyzes the conversion of urocanate to 4-imidazolone-5-propionate. This chain is Urocanate hydratase, found in Shewanella baltica (strain OS223).